The primary structure comprises 309 residues: Elongator complex protein 5 (309 aa).

Phosphoserine occurs at positions 3 and 4.

Belongs to the ELP5 family. Component of the elongator complex, which consists of ELP1/IKI3, ELP2, ELP3, ELP4, ELP5/IKI1 and ELP6. The elongator complex is composed of two copies of the Elp123 subcomplex (composed of ELP1/IKI3, ELP2 and ELP3) and two copies of the Elp456 subcomplex (composed of ELP4, ELP5/IKI1 and ELP6). The Elp123 subcomplex forms a two-lobed scaffold, which binds the Elp456 subcomplex asymmetrically. In each lobe, ELP2 is tightly sandwiched between ELP1/IKI3 and ELP3. The Elp123 subcomplex binds tRNA through ELP1/IKI3 and ELP3 and can bind 2 tRNAs simultaneously. tRNA-binding by the Elp123 subcomplex induces conformational rearrangements which precisely position the targeted anticodon base in the active site. The Elp456 subcomplex binds tRNA and has ATPase activity. Interacts with KTI11/DPH3.

The protein resides in the cytoplasm. Its subcellular location is the nucleus. Its pathway is tRNA modification; 5-methoxycarbonylmethyl-2-thiouridine-tRNA biosynthesis. Component of the elongator complex which is required for multiple tRNA modifications, including mcm5U (5-methoxycarbonylmethyl uridine), mcm5s2U (5-methoxycarbonylmethyl-2-thiouridine), and ncm5U (5-carbamoylmethyl uridine). The elongator complex catalyzes formation of carboxymethyluridine in the wobble base at position 34 in tRNAs. It functions as a gamma-toxin target (TOT); disruption of the complex confers resistance to Kluyveromyces lactis toxin zymocin (pGKL1 killer toxin). May also be involved in sensitivity to Pichia inositovora toxin. This is Elongator complex protein 5 (IKI1) from Saccharomyces cerevisiae (strain ATCC 204508 / S288c) (Baker's yeast).